A 1220-amino-acid polypeptide reads, in one-letter code: MAVSRLLILICLYSFVTFAYPKVTQDYRNHLPIKFAKRSEVTPNTSLAQCPKYVTVYSSGSSHYISTIYPVNKTHHTEYTTLTDGSIDTYTITAKTDTGTDVVVVETSANTITTTLYSGSLEFTTTLDSANGTTPATIEVVEPAAGTVTTTIYSGTTPFNTTLASATDTVPGTVEVVEPEAGTVTTTVYSGTQEYTTTLATASGTVSGTVEVVDTAAGTVTTTIYSGTTPFNTTLASATDTVPGTVEVVEPEAGTVTTTVYSGTQEYTTTLATASGTVSGTVEVVDTAAGTVTTTIYSGTTPFNTTLASATDTVPGTVEVVEPEAGTVTTTVYSGTQEYTTTLATASGTVSGTVEVVDTAAGTVTTTIYSGTTPFNTTLASATDTVPGTVEVVEPEAGTVTTTVYSGTQEYTTTLATASGTVSGTVEVVDTAAGTVTTTIYSGTTPFNTTLASATDTVPGTVEVVEPEAGTVTTTVYSGTQEYTTTLATASGTVSGTVEVVDTAAGTVTTTIYSGTTPFNTTLASATDTVPGTVEVVEPEAGTVTTTVYSGTQEYTTTLATASGTVSGTVEVVDTAAGTVTTTIYSGTTPFNTTLASATDTVPGTVEVVEPEAGTVTTTVYSGTQEYTTTLATASGTVSGTVEVIEPAAGTVTTTVYSGTQEYTTTLATASGTVSGTVEVIEPAAGTVTSTVYSGTQEYTTTLATASGTVSGTVEVIEPAAGTVTTTVYSGTQEYTTTLATASGTVSGTVEVIEPAAGTVTTTVYSGSEVYTTTLASASESVPGTVEVVDPEAGSVTTTIYSGSVEYTTVLADASGSVTGTVEVVEPAAGTVTTTVYSGSEVYTTTLASASESVPGTVEVVDPEAGSVTTTIYSGSVEYTTVLADASGSVTGTVEVVEPAAGTVTGTLTSGSQFFTTTIAQASGSVSGNVEVIEPSGSTVTSTIYSGSESFTTTLAVGSGTIPGTVEVILPAPTTIYTGTVATTITYSSSSTPVSTVVVIPTAVCSGVRGLQYAVYNYDISASKSKFCVSSGNTDVAAFTQPAYFGSSSLDQSSPLFTGVLSSTAALPEWTSSYYLPDYPPDATAMESTRCNCKAIVYQFFFRVPYTDTYELNVYNVDDVFYGWFGDKAISGWSNTNYDAYAYWHVTTGQTGMGSFSMGTLTQGSFLPIRLIVANGGGKGGFNFDFSSSTDTYAATSYAYTATCTQSFLPFGLGNGGIDN.

The signal sequence occupies residues 1–21 (MAVSRLLILICLYSFVTFAYP). Asn-44, Asn-72, Asn-131, and Asn-160 each carry an N-linked (GlcNAc...) asparagine glycan. A run of 24 repeats spans residues 110 to 145 (NTIT…EPAA), 146 to 181 (GTVT…EPEA), 182 to 217 (GTVT…DTAA), 218 to 253 (GTVT…EPEA), 254 to 289 (GTVT…DTAA), 290 to 325 (GTVT…EPEA), 326 to 361 (GTVT…DTAA), 362 to 397 (GTVT…EPEA), 398 to 433 (GTVT…DTAA), 434 to 469 (GTVT…EPEA), 470 to 505 (GTVT…DTAA), 506 to 541 (GTVT…EPEA), 542 to 577 (GTVT…DTAA), 578 to 613 (GTVT…EPEA), 614 to 649 (GTVT…EPAA), 650 to 685 (GTVT…EPAA), 686 to 721 (GTVT…EPAA), 722 to 757 (GTVT…EPAA), 758 to 793 (GTVT…DPEA), 794 to 829 (GSVT…EPAA), 830 to 865 (GTVT…DPEA), 866 to 901 (GSVT…EPAA), 902 to 937 (GTVT…EPSG), and 938 to 973 (STVT…LPAP). Positions 110–973 (NTITTTLYSG…GTVEVILPAP (864 aa)) are 24 X 36 AA approximate tandem repeats. Residue Asn-232 is glycosylated (N-linked (GlcNAc...) asparagine). Asn-304 carries an N-linked (GlcNAc...) asparagine glycan. Residue Asn-376 is glycosylated (N-linked (GlcNAc...) asparagine). An N-linked (GlcNAc...) asparagine glycan is attached at Asn-448. Residue Asn-520 is glycosylated (N-linked (GlcNAc...) asparagine). An N-linked (GlcNAc...) asparagine glycan is attached at Asn-592. Residues 1039–1202 (FTQPAYFGSS…YAATSYAYTA (164 aa)) form the PA14 domain.

Belongs to the mam3/map4 family.

It localises to the cell surface. Functionally, may be involved in agglutination during conjugation or other aspects of colony formation. The sequence is that of Putative cell agglutination protein SPAPB2C8.01 from Schizosaccharomyces pombe (strain 972 / ATCC 24843) (Fission yeast).